The primary structure comprises 196 residues: Phosphoheptose isomerase (196 aa).

An SIS domain is found at 34 to 192 (MVQCLLGGNK…CEIIDTTLFP (159 aa)). 49–51 (NGG) is a substrate binding site. Positions 58 and 62 each coordinate Zn(2+). Residues Q62, 91-92 (ND), 117-119 (STS), S122, and Q172 each bind substrate. Positions 172 and 180 each coordinate Zn(2+).

This sequence belongs to the SIS family. GmhA subfamily. As to quaternary structure, homotetramer. Zn(2+) is required as a cofactor.

The protein localises to the cytoplasm. The enzyme catalyses 2 D-sedoheptulose 7-phosphate = D-glycero-alpha-D-manno-heptose 7-phosphate + D-glycero-beta-D-manno-heptose 7-phosphate. It participates in carbohydrate biosynthesis; D-glycero-D-manno-heptose 7-phosphate biosynthesis; D-glycero-alpha-D-manno-heptose 7-phosphate and D-glycero-beta-D-manno-heptose 7-phosphate from sedoheptulose 7-phosphate: step 1/1. Catalyzes the isomerization of sedoheptulose 7-phosphate in D-glycero-D-manno-heptose 7-phosphate. This is Phosphoheptose isomerase from Colwellia psychrerythraea (strain 34H / ATCC BAA-681) (Vibrio psychroerythus).